The sequence spans 122 residues: Small ribosomal subunit protein uS13 (122 aa).

Residues 95–122 (NLPVRGQRTHTNARTRKGKAKPIAGKKK) are disordered.

This sequence belongs to the universal ribosomal protein uS13 family. In terms of assembly, part of the 30S ribosomal subunit. Forms a loose heterodimer with protein S19. Forms two bridges to the 50S subunit in the 70S ribosome.

Its function is as follows. Located at the top of the head of the 30S subunit, it contacts several helices of the 16S rRNA. In the 70S ribosome it contacts the 23S rRNA (bridge B1a) and protein L5 of the 50S subunit (bridge B1b), connecting the 2 subunits; these bridges are implicated in subunit movement. Contacts the tRNAs in the A and P-sites. The polypeptide is Small ribosomal subunit protein uS13 (Methylobacterium sp. (strain 4-46)).